Reading from the N-terminus, the 523-residue chain is Probable lipid II flippase MurJ (523 aa).

The next 12 membrane-spanning stretches (helical) occupy residues alanine 98–valine 118, isoleucine 146–alanine 166, phenylalanine 170–methionine 190, glycine 201–leucine 221, methionine 246–phenylalanine 266, leucine 284–leucine 304, leucine 328–valine 348, valine 360–serine 380, valine 395–methionine 415, glycine 422–leucine 442, phenylalanine 461–glutamine 481, and leucine 489–leucine 509.

Belongs to the MurJ/MviN family.

The protein resides in the cell inner membrane. It functions in the pathway cell wall biogenesis; peptidoglycan biosynthesis. In terms of biological role, involved in peptidoglycan biosynthesis. Transports lipid-linked peptidoglycan precursors from the inner to the outer leaflet of the cytoplasmic membrane. The chain is Probable lipid II flippase MurJ from Bdellovibrio bacteriovorus (strain ATCC 15356 / DSM 50701 / NCIMB 9529 / HD100).